A 533-amino-acid polypeptide reads, in one-letter code: CWF19-like protein 1 homolog (533 aa).

The disordered stretch occupies residues 290 to 314 (EMGGAEDGAGNGRKRHNDGGNDGPR).

Belongs to the CWF19 family.

This Caenorhabditis elegans protein is CWF19-like protein 1 homolog.